Consider the following 137-residue polypeptide: Leaf-specific thionin DB4 (137 aa).

A signal peptide spans 1 to 28 (MAPSKSIKSVVICVLILGLVLEQVQVEG). 4 disulfide bridges follow: C31-C68, C32-C60, C40-C58, and C44-C54. A propeptide spans 75–137 (LNLLPESGEP…DGAVIQSVEA (63 aa)) (acidic domain).

This sequence belongs to the plant thionin (TC 1.C.44) family. 4 C-C subfamily.

Its subcellular location is the secreted. Its function is as follows. Thionins are small plant proteins which are toxic to animal cells. They seem to exert their toxic effect at the level of the cell membrane. Their precise function is not known. In Hordeum vulgare (Barley), this protein is Leaf-specific thionin DB4 (THI1.3).